Consider the following 393-residue polypeptide: Acetylornithine aminotransferase 1 (393 aa).

Arginine 131 is a binding site for N(2)-acetyl-L-ornithine. 215 to 218 (DEVQ) contributes to the pyridoxal 5'-phosphate binding site. Lysine 244 carries the post-translational modification N6-(pyridoxal phosphate)lysine. N(2)-acetyl-L-ornithine is bound at residue threonine 272. Threonine 273 lines the pyridoxal 5'-phosphate pocket.

It belongs to the class-III pyridoxal-phosphate-dependent aminotransferase family. ArgD subfamily. In terms of assembly, homodimer. Requires pyridoxal 5'-phosphate as cofactor.

The protein localises to the cytoplasm. It carries out the reaction N(2)-acetyl-L-ornithine + 2-oxoglutarate = N-acetyl-L-glutamate 5-semialdehyde + L-glutamate. It functions in the pathway amino-acid biosynthesis; L-arginine biosynthesis; N(2)-acetyl-L-ornithine from L-glutamate: step 4/4. The chain is Acetylornithine aminotransferase 1 from Bordetella parapertussis (strain 12822 / ATCC BAA-587 / NCTC 13253).